The sequence spans 360 residues: Pyrimidine monooxygenase RutA (360 aa).

Residues 49-50 (IK), Asn-115, Glu-124, 140-141 (RY), and Ser-190 contribute to the FMN site.

Belongs to the NtaA/SnaA/DszA monooxygenase family. RutA subfamily.

The catalysed reaction is uracil + FMNH2 + NADH + O2 = (Z)-3-ureidoacrylate + FMN + NAD(+) + H2O + H(+). It catalyses the reaction thymine + FMNH2 + NADH + O2 = (Z)-2-methylureidoacrylate + FMN + NAD(+) + H2O + H(+). In terms of biological role, catalyzes the pyrimidine ring opening between N-3 and C-4 by an unusual flavin hydroperoxide-catalyzed mechanism, adding oxygen atoms in the process to yield ureidoacrylate peracid, that immediately reacts with FMN forming ureidoacrylate and FMN-N(5)-oxide. The FMN-N(5)-oxide reacts spontaneously with NADH to produce FMN. Requires the flavin reductase RutF to regenerate FMN in vivo. This chain is Pyrimidine monooxygenase RutA, found in Stutzerimonas stutzeri (strain A1501) (Pseudomonas stutzeri).